Here is a 430-residue protein sequence, read N- to C-terminus: Serine--tRNA ligase (430 aa).

Residue 237–239 (TAE) participates in L-serine binding. 268–270 (RSE) is a binding site for ATP. E291 contacts L-serine. Position 355 to 358 (355 to 358 (EISS)) interacts with ATP. S391 is a binding site for L-serine.

The protein belongs to the class-II aminoacyl-tRNA synthetase family. Type-1 seryl-tRNA synthetase subfamily. Homodimer. The tRNA molecule binds across the dimer.

It localises to the cytoplasm. The enzyme catalyses tRNA(Ser) + L-serine + ATP = L-seryl-tRNA(Ser) + AMP + diphosphate + H(+). The catalysed reaction is tRNA(Sec) + L-serine + ATP = L-seryl-tRNA(Sec) + AMP + diphosphate + H(+). Its pathway is aminoacyl-tRNA biosynthesis; selenocysteinyl-tRNA(Sec) biosynthesis; L-seryl-tRNA(Sec) from L-serine and tRNA(Sec): step 1/1. Catalyzes the attachment of serine to tRNA(Ser). Is also able to aminoacylate tRNA(Sec) with serine, to form the misacylated tRNA L-seryl-tRNA(Sec), which will be further converted into selenocysteinyl-tRNA(Sec). This chain is Serine--tRNA ligase, found in Escherichia coli O139:H28 (strain E24377A / ETEC).